A 238-amino-acid chain; its full sequence is Insulin-like growth factor-binding protein 6 (238 aa).

The N-terminal stretch at 1–25 is a signal peptide; it reads MTWDGLPTQPLLMLLMLLFAAGSGS. Positions 26 to 108 constitute an IGFBP N-terminal domain; that stretch reads ALAGCPGCGA…LIGQGRCQRA (83 aa). Disulfide bonds link Cys-30-Cys-33, Cys-41-Cys-45, Cys-58-Cys-64, Cys-72-Cys-85, and Cys-79-Cys-105. The segment at 104–159 is disordered; it reads RCQRARGPSEETTKESKPQGGASRSRDTNHRDRQKNPRTSAAPIRPNPVQDSEMGP. 2 stretches are compositionally biased toward basic and acidic residues: residues 110-120 and 127-138; these read GPSEETTKESK and RSRDTNHRDRQK. One can recognise a Thyroglobulin type-1 domain in the interval 157–232; that stretch reads MGPCRRHLDS…SPDGQGSTQC (76 aa). Intrachain disulfides connect Cys-160–Cys-188, Cys-199–Cys-210, and Cys-212–Cys-232. The tract at residues 218–238 is disordered; that stretch reads QPLPVSPDGQGSTQCSARSSG. The segment covering 226-238 has biased composition (polar residues); the sequence is GQGSTQCSARSSG.

In terms of assembly, interacts (via C-terminal domain) with PHB2. Post-translationally, O-glycosylated.

The protein localises to the secreted. Its function is as follows. IGF-binding proteins prolong the half-life of the IGFs and have been shown to either inhibit or stimulate the growth promoting effects of the IGFs on cell culture. They alter the interaction of IGFs with their cell surface receptors. Activates the MAPK signaling pathway and induces cell migration. This chain is Insulin-like growth factor-binding protein 6 (Igfbp6), found in Mus musculus (Mouse).